Reading from the N-terminus, the 200-residue chain is Glycerol-3-phosphate acyltransferase (200 aa).

5 consecutive transmembrane segments (helical) span residues 6-26, 56-76, 82-102, 118-138, and 141-161; these read LTLG…AVLV, SAAM…YIAF, QVAL…PIFF, APIG…MVLI, and YSSL…WFLD.

The protein belongs to the PlsY family. In terms of assembly, probably interacts with PlsX.

It is found in the cell inner membrane. The catalysed reaction is an acyl phosphate + sn-glycerol 3-phosphate = a 1-acyl-sn-glycero-3-phosphate + phosphate. It participates in lipid metabolism; phospholipid metabolism. Its function is as follows. Catalyzes the transfer of an acyl group from acyl-phosphate (acyl-PO(4)) to glycerol-3-phosphate (G3P) to form lysophosphatidic acid (LPA). This enzyme utilizes acyl-phosphate as fatty acyl donor, but not acyl-CoA or acyl-ACP. This Shewanella sediminis (strain HAW-EB3) protein is Glycerol-3-phosphate acyltransferase.